The sequence spans 552 residues: Kumamolisin (552 aa).

The span at 1-17 (MSDMEKPWKEEEKREVL) shows a compositional bias: basic and acidic residues. The disordered stretch occupies residues 1–34 (MSDMEKPWKEEEKREVLAGHARRQAPQAVDKGPV). Residues 193 to 546 (AYTPLDVAQA…IRLLQALLPS (354 aa)) enclose the Peptidase S53 domain. Catalysis depends on charge relay system residues glutamate 266, aspartate 270, and serine 466. Ca(2+) contacts are provided by aspartate 504, isoleucine 505, glycine 522, glycine 524, and aspartate 526.

In terms of assembly, forms monomeric and dimeric crystals. Ca(2+) serves as cofactor. Autocatalytically processed.

The protein localises to the secreted. It carries out the reaction The enzyme preferentially hydrolyzes peptides having an Ala or Pro residue at P2 position and prefers such charged amino acid residues as Glu or Arg at the P2' position. In the oxidized insulin B chain, kumamolysin preferentially cleaves between Leu(15) and Tyr(16).. With respect to regulation, inactivated at 22.4 and 37 degrees Celsius, but not at 60 degrees Celsius, by aldehyde-type inhibitors such as acetyl-Ile-Ala-Phe-CHO and acetyl-Ile-Pro-Phe-CHO. Insensitive to the known carboxyl proteinase inhibitors pepstatin, diazoacetyl-DL-norleucine methyl ester (DAN) and 1,2-epoxy-3-(p-nitrophenoxy)propane (EPNP). Not inhibited by Ala-Ala-Phe-chloromethylketone, an inhibitor of the human tripeptidyl-peptidase 1. In terms of biological role, thermostable pepstatin-insensitive serine-carboxyl proteinase. Preferentially hydrolyzes synthetic peptides having an Ala or Pro residue at the P2 position and charged amino acids such as Glu or Arg at the P2' position. In vitro, specifically hydrolyzes the Leu-15-Tyr-16 peptide bond in oxidized insulin B-chain. Additional cleavage of oxidized insulin B-chain at Phe-25-Tyr-26 is detected at a considerably lower rate. Can hydrolyze collagen and the chromogenic substrate azocoll. Shows lower activity with albumin and casein. Shows very weak tripeptidyl peptidase activity. The protein is Kumamolisin of Bacillus sp. (strain MN-32).